Consider the following 278-residue polypeptide: Large ribosomal subunit protein uL2c (278 aa).

The segment at 222 to 241 (GVVMNPNDHPHGGGEGRSPI) is disordered.

It belongs to the universal ribosomal protein uL2 family. Part of the 50S ribosomal subunit.

The protein resides in the plastid. Its subcellular location is the chloroplast. The sequence is that of Large ribosomal subunit protein uL2c (rpl2) from Tupiella akineta (Green alga).